Here is a 308-residue protein sequence, read N- to C-terminus: Bifunctional protein FolD (308 aa).

170 to 172 (GKG) is a binding site for NADP(+).

It belongs to the tetrahydrofolate dehydrogenase/cyclohydrolase family. In terms of assembly, homodimer.

The catalysed reaction is (6R)-5,10-methylene-5,6,7,8-tetrahydrofolate + NADP(+) = (6R)-5,10-methenyltetrahydrofolate + NADPH. It catalyses the reaction (6R)-5,10-methenyltetrahydrofolate + H2O = (6R)-10-formyltetrahydrofolate + H(+). It functions in the pathway one-carbon metabolism; tetrahydrofolate interconversion. Its function is as follows. Catalyzes the oxidation of 5,10-methylenetetrahydrofolate to 5,10-methenyltetrahydrofolate and then the hydrolysis of 5,10-methenyltetrahydrofolate to 10-formyltetrahydrofolate. The polypeptide is Bifunctional protein FolD (Pyrobaculum calidifontis (strain DSM 21063 / JCM 11548 / VA1)).